Here is a 299-residue protein sequence, read N- to C-terminus: Bifunctional protein FolD (299 aa).

Residues 166 to 168 (GRS), S191, and I232 contribute to the NADP(+) site.

It belongs to the tetrahydrofolate dehydrogenase/cyclohydrolase family. As to quaternary structure, homodimer.

The enzyme catalyses (6R)-5,10-methylene-5,6,7,8-tetrahydrofolate + NADP(+) = (6R)-5,10-methenyltetrahydrofolate + NADPH. It catalyses the reaction (6R)-5,10-methenyltetrahydrofolate + H2O = (6R)-10-formyltetrahydrofolate + H(+). It functions in the pathway one-carbon metabolism; tetrahydrofolate interconversion. In terms of biological role, catalyzes the oxidation of 5,10-methylenetetrahydrofolate to 5,10-methenyltetrahydrofolate and then the hydrolysis of 5,10-methenyltetrahydrofolate to 10-formyltetrahydrofolate. The sequence is that of Bifunctional protein FolD from Anaplasma marginale (strain St. Maries).